The following is a 343-amino-acid chain: Twinfilin (343 aa).

ADF-H domains follow at residues 11–135 (EQLA…EGYR) and 184–312 (EATV…DELH). The interval 319-343 (RPAFAKPKGPPNRGAKRLTRPTAED) is disordered.

This sequence belongs to the actin-binding proteins ADF family. Twinfilin subfamily. As to quaternary structure, interacts with G-actin; ADP-actin form.

The protein localises to the cytoplasm. Its subcellular location is the cytoskeleton. It is found in the cell cortex. In terms of biological role, actin-binding protein involved in motile and morphological processes. Inhibits actin polymerization, likely by sequestering G-actin. The polypeptide is Twinfilin (twf) (Drosophila melanogaster (Fruit fly)).